Reading from the N-terminus, the 650-residue chain is MRCSVSSVVRPLSVDPATAIATLCSKGNLREAFQRFRLNIFTNTSLFTPFIQSCTTRQSLPSGKQLHCLLVVSGFSSDKFICNHLMSMYSKLGDFPSAVAVYGRMRKKNYMSSNILINGYVRAGDLVNARKVFDEMPDRKLTTWNAMIAGLIQFEFNEEGLSLFREMHGLGFSPDEYTLGSVFSGSAGLRSVSIGQQIHGYTIKYGLELDLVVNSSLAHMYMRNGKLQDGEIVIRSMPVRNLVAWNTLIMGNAQNGCPETVLYLYKMMKISGCRPNKITFVTVLSSCSDLAIRGQGQQIHAEAIKIGASSVVAVVSSLISMYSKCGCLGDAAKAFSEREDEDEVMWSSMISAYGFHGQGDEAIELFNTMAEQTNMEINEVAFLNLLYACSHSGLKDKGLELFDMMVEKYGFKPGLKHYTCVVDLLGRAGCLDQAEAIIRSMPIKTDIVIWKTLLSACNIHKNAEMAQRVFKEILQIDPNDSACYVLLANVHASAKRWRDVSEVRKSMRDKNVKKEAGISWFEHKGEVHQFKMGDRSQSKSKEIYSYLKELTLEMKLKGYKPDTASVLHDMDEEEKESDLVQHSEKLAVAFALMILPEGAPIRIIKNLRVCSDCHVAFKYISVIKNREITLRDGSRFHHFINGKCSCGDYW.

PPR repeat units lie at residues 43–77, 78–112, 114–139, 140–174, 175–209, 210–240, 241–275, 276–310, 311–341, 342–372, 378–413, and 414–444; these read NTSL…GFSS, DKFI…NYMS, NILI…MPDR, KLTT…GFSP, DEYT…GLEL, DLVV…MPVR, NLVA…GCRP, NKIT…GASS, VVAV…REDE, DEVM…MAEQ, NEVA…GFKP, and GLKH…MPIK. Residues 449-524 are type E motif; that stretch reads IWKTLLSACN…EAGISWFEHK (76 aa). Residues 525–555 form a type E(+) motif region; it reads GEVHQFKMGDRSQSKSKEIYSYLKELTLEMK. A type DYW motif region spans residues 556-650; that stretch reads LKGYKPDTAS…NGKCSCGDYW (95 aa).

The protein belongs to the PPR family. PCMP-H subfamily.

The polypeptide is Pentatricopeptide repeat-containing protein At2g41080 (PCMP-H29) (Arabidopsis thaliana (Mouse-ear cress)).